Reading from the N-terminus, the 202-residue chain is 3-isopropylmalate dehydratase small subunit 1 (202 aa).

The protein belongs to the LeuD family. LeuD type 1 subfamily. Heterodimer of LeuC and LeuD.

The enzyme catalyses (2R,3S)-3-isopropylmalate = (2S)-2-isopropylmalate. It participates in amino-acid biosynthesis; L-leucine biosynthesis; L-leucine from 3-methyl-2-oxobutanoate: step 2/4. Functionally, catalyzes the isomerization between 2-isopropylmalate and 3-isopropylmalate, via the formation of 2-isopropylmaleate. In Mannheimia succiniciproducens (strain KCTC 0769BP / MBEL55E), this protein is 3-isopropylmalate dehydratase small subunit 1.